A 378-amino-acid chain; its full sequence is UDP-N-acetylglucosamine--N-acetylmuramyl-(pentapeptide) pyrophosphoryl-undecaprenol N-acetylglucosamine transferase (378 aa).

UDP-N-acetyl-alpha-D-glucosamine-binding positions include 24 to 26 (TAG), asparagine 144, arginine 181, serine 215, and glutamine 310.

This sequence belongs to the glycosyltransferase 28 family. MurG subfamily.

It localises to the cell membrane. The catalysed reaction is di-trans,octa-cis-undecaprenyl diphospho-N-acetyl-alpha-D-muramoyl-L-alanyl-D-glutamyl-meso-2,6-diaminopimeloyl-D-alanyl-D-alanine + UDP-N-acetyl-alpha-D-glucosamine = di-trans,octa-cis-undecaprenyl diphospho-[N-acetyl-alpha-D-glucosaminyl-(1-&gt;4)]-N-acetyl-alpha-D-muramoyl-L-alanyl-D-glutamyl-meso-2,6-diaminopimeloyl-D-alanyl-D-alanine + UDP + H(+). It functions in the pathway cell wall biogenesis; peptidoglycan biosynthesis. Its function is as follows. Cell wall formation. Catalyzes the transfer of a GlcNAc subunit on undecaprenyl-pyrophosphoryl-MurNAc-pentapeptide (lipid intermediate I) to form undecaprenyl-pyrophosphoryl-MurNAc-(pentapeptide)GlcNAc (lipid intermediate II). This Nocardia farcinica (strain IFM 10152) protein is UDP-N-acetylglucosamine--N-acetylmuramyl-(pentapeptide) pyrophosphoryl-undecaprenol N-acetylglucosamine transferase.